Reading from the N-terminus, the 170-residue chain is Cilia- and flagella-associated protein 276 (170 aa).

Disordered stretches follow at residues Met1–Leu37 and His151–Thr170.

Microtubule inner protein component of sperm flagellar doublet microtubules. In terms of tissue distribution, expressed in trachea multiciliated cells.

Its subcellular location is the cytoplasm. The protein localises to the cytoskeleton. It is found in the cilium axoneme. It localises to the flagellum axoneme. Its function is as follows. Microtubule inner protein (MIP) part of the dynein-decorated doublet microtubules (DMTs) in cilia axoneme, which is required for motile cilia beating. May play an important role for the maintenance of myelin-axon integrity. May affect intracellular Ca(2+) homeostasis. This Bos taurus (Bovine) protein is Cilia- and flagella-associated protein 276.